The chain runs to 206 residues: Large ribosomal subunit protein uL13x (206 aa).

The protein belongs to the universal ribosomal protein uL13 family.

This is Large ribosomal subunit protein uL13x (RPL13AC) from Arabidopsis thaliana (Mouse-ear cress).